The primary structure comprises 247 residues: Probable transcriptional regulatory protein plu2109 (247 aa).

This sequence belongs to the TACO1 family.

Its subcellular location is the cytoplasm. The protein is Probable transcriptional regulatory protein plu2109 of Photorhabdus laumondii subsp. laumondii (strain DSM 15139 / CIP 105565 / TT01) (Photorhabdus luminescens subsp. laumondii).